The chain runs to 428 residues: Putative gustatory receptor 2a (428 aa).

Over 1–40 the chain is Cytoplasmic; it reads MDTLRALEPLHRACQVCNLWPWRLAPPPDSEGILLRRSRW. Residues 41–61 form a helical membrane-spanning segment; that stretch reads LELYGWTVLIAATSFTVYGLF. Over 62–145 the chain is Extracellular; sequence QESSVEEKQD…INMRRQTSRR (84 aa). A helical membrane pass occupies residues 146 to 166; it reads AVWILWGYAVSQLLILGAKLL. The Cytoplasmic portion of the chain corresponds to 167–173; sequence SRGDRFP. A helical transmembrane segment spans residues 174–194; that stretch reads IYWISYLLPLLVCGLRYFQIF. An N-linked (GlcNAc...) asparagine glycan is attached at N195. The Extracellular segment spans residues 195–250; it reads NATQLVRQRLDVLLVALQQLQLHQKGPAVDTVLEEQEDLEEAAMDRLIAVRLVYQR. The chain crosses the membrane as a helical span at residues 251–271; the sequence is VWALVALLNRCYGLSMLMQVG. Residues 272 to 300 lie on the Cytoplasmic side of the membrane; it reads NDFLAITSNCYWMFLNFRQSAASPFDILQ. A helical transmembrane segment spans residues 301-321; it reads IVASGVWSAPHLGNVLVLSLL. At 322 to 349 the chain is on the extracellular side; sequence CDRTAQCASRLALCLHQVSVDLRNESHN. Residue N345 is glycosylated (N-linked (GlcNAc...) asparagine). Residues 350–370 form a helical membrane-spanning segment; that stretch reads ALVGTLVRYCAPLIILVPLQI. Residues 371-395 are Cytoplasmic-facing; that stretch reads TQFSLQLLHQRLHFSAAGFFNVDCT. The chain crosses the membrane as a helical span at residues 396–416; that stretch reads LLYTIVGATTTYLIILIQFHM. Over 417-428 the chain is Extracellular; sequence SESTIGSDSNGQ.

Belongs to the insect chemoreceptor superfamily. Gustatory receptor (GR) family. Gr2a subfamily. Expressed in neurons of the terminal external chemosensory organ, the dorsal external chemosensory organ, as well as in the dorsal pharyngeal sense organ of larvae.

The protein resides in the cell membrane. Its function is as follows. Probable gustatory receptor which mediates acceptance or avoidance behavior, depending on its not yet determined substrates. The protein is Putative gustatory receptor 2a (Gr2a) of Drosophila melanogaster (Fruit fly).